A 507-amino-acid polypeptide reads, in one-letter code: Putative F-box/LRR-repeat protein At4g00320 (507 aa).

An F-box domain is found at 12 to 60 (RDGISGLPDAMICHILSFLPTKVAASTTVLAKRWKPLLAFMPNLDFDES). 5 LRR repeats span residues 135–163 (RGFGSNSTFYPLPSEIFVSKTLVRLKIQF), 187–212 (YVKMDTRMLQKLLSGCHTLEELLLMN), 214–240 (IWKESSEPEPCFVSVSVRTLKILKFSR), 317–348 (ILYLTEDTLKVLGCCRETMPVFENLIHLTIRT), and 349–374 (GVHIGWKSLPHLLKNCPNLQTLVFEG).

The chain is Putative F-box/LRR-repeat protein At4g00320 from Arabidopsis thaliana (Mouse-ear cress).